A 310-amino-acid chain; its full sequence is Protoheme IX farnesyltransferase (310 aa).

A run of 9 helical transmembrane segments spans residues 26-46 (VMSL…ATVH), 47-67 (PMIA…SGAL), 95-115 (GEAL…LGLA), 118-138 (LFAA…YSMW), 147-167 (IVIG…VATG), 174-194 (LFMF…LALF), 220-240 (VLAY…TGIG), 243-263 (LYLV…VRIW), and 281-301 (FFRF…AEAA).

Belongs to the UbiA prenyltransferase family. Protoheme IX farnesyltransferase subfamily. In terms of assembly, interacts with CtaA.

The protein resides in the cell inner membrane. It catalyses the reaction heme b + (2E,6E)-farnesyl diphosphate + H2O = Fe(II)-heme o + diphosphate. The protein operates within porphyrin-containing compound metabolism; heme O biosynthesis; heme O from protoheme: step 1/1. Functionally, converts heme B (protoheme IX) to heme O by substitution of the vinyl group on carbon 2 of heme B porphyrin ring with a hydroxyethyl farnesyl side group. The chain is Protoheme IX farnesyltransferase from Cereibacter sphaeroides (strain ATCC 17025 / ATH 2.4.3) (Rhodobacter sphaeroides).